Reading from the N-terminus, the 357-residue chain is 3-isopropylmalate dehydrogenase (357 aa).

Residue 77–90 participates in NAD(+) binding; sequence GPKWDTLPGEKRPE. The substrate site is built by R97, R107, R136, and D224. The Mg(2+) site is built by D224, D248, and D252. Residue 282–294 participates in NAD(+) binding; the sequence is GSAPDIAGQDLAN.

This sequence belongs to the isocitrate and isopropylmalate dehydrogenases family. LeuB type 1 subfamily. In terms of assembly, homodimer. The cofactor is Mg(2+). It depends on Mn(2+) as a cofactor.

It localises to the cytoplasm. It carries out the reaction (2R,3S)-3-isopropylmalate + NAD(+) = 4-methyl-2-oxopentanoate + CO2 + NADH. Its pathway is amino-acid biosynthesis; L-leucine biosynthesis; L-leucine from 3-methyl-2-oxobutanoate: step 3/4. Its function is as follows. Catalyzes the oxidation of 3-carboxy-2-hydroxy-4-methylpentanoate (3-isopropylmalate) to 3-carboxy-4-methyl-2-oxopentanoate. The product decarboxylates to 4-methyl-2 oxopentanoate. The chain is 3-isopropylmalate dehydrogenase from Clostridium acetobutylicum (strain ATCC 824 / DSM 792 / JCM 1419 / IAM 19013 / LMG 5710 / NBRC 13948 / NRRL B-527 / VKM B-1787 / 2291 / W).